The sequence spans 261 residues: MKVALGIEYDGSNYFGWQRQAEVVSVQQTLEEALSKVTNTTIEVFCAGRTDSGVHGTGQVVHFDTEVERPLASWCFGTNAHLANDIAVKWAVKVAEDFHARFSATARRYRYIIFNSKLRTAILPKGVAHYHYPLDAQKMHQAGQYLLGEQDFSSFRAAKCQSHTPWRNIHHLNVVRQGNYVIVDIQANAFVHHMVRNIVGSLLEVGQGRQPIEWIKWLLEQKNRQLAAPTTKAEGLYLVNVEYPSRFGIPKTALGPLFLAD.

Aspartate 51 serves as the catalytic Nucleophile. Residue tyrosine 109 participates in substrate binding.

Belongs to the tRNA pseudouridine synthase TruA family. As to quaternary structure, homodimer.

The enzyme catalyses uridine(38/39/40) in tRNA = pseudouridine(38/39/40) in tRNA. Functionally, formation of pseudouridine at positions 38, 39 and 40 in the anticodon stem and loop of transfer RNAs. This Haemophilus ducreyi (strain 35000HP / ATCC 700724) protein is tRNA pseudouridine synthase A.